The sequence spans 444 residues: Maturase K (444 aa).

Belongs to the intron maturase 2 family. MatK subfamily.

Its subcellular location is the plastid. The protein resides in the chloroplast. Functionally, usually encoded in the trnK tRNA gene intron. Probably assists in splicing its own and other chloroplast group II introns. This is Maturase K from Chamaecyparis lawsoniana (Lawson false cypress).